The sequence spans 158 residues: SsrA-binding protein (158 aa).

It belongs to the SmpB family.

It is found in the cytoplasm. Its function is as follows. Required for rescue of stalled ribosomes mediated by trans-translation. Binds to transfer-messenger RNA (tmRNA), required for stable association of tmRNA with ribosomes. tmRNA and SmpB together mimic tRNA shape, replacing the anticodon stem-loop with SmpB. tmRNA is encoded by the ssrA gene; the 2 termini fold to resemble tRNA(Ala) and it encodes a 'tag peptide', a short internal open reading frame. During trans-translation Ala-aminoacylated tmRNA acts like a tRNA, entering the A-site of stalled ribosomes, displacing the stalled mRNA. The ribosome then switches to translate the ORF on the tmRNA; the nascent peptide is terminated with the 'tag peptide' encoded by the tmRNA and targeted for degradation. The ribosome is freed to recommence translation, which seems to be the essential function of trans-translation. This is SsrA-binding protein from Hydrogenovibrio crunogenus (strain DSM 25203 / XCL-2) (Thiomicrospira crunogena).